Reading from the N-terminus, the 429-residue chain is Queuine tRNA-ribosyltransferase accessory subunit 2 (429 aa).

Residues Cys-330, Cys-332, Cys-335, and His-361 each coordinate Zn(2+).

The protein belongs to the queuine tRNA-ribosyltransferase family. QTRT2 subfamily. As to quaternary structure, heterodimer of a catalytic subunit and an accessory subunit. Requires Zn(2+) as cofactor.

The protein localises to the cytoplasm. Functionally, non-catalytic subunit of the queuine tRNA-ribosyltransferase (TGT) that catalyzes the base-exchange of a guanine (G) residue with queuine (Q) at position 34 (anticodon wobble position) in tRNAs with GU(N) anticodons (tRNA-Asp, -Asn, -His and -Tyr), resulting in the hypermodified nucleoside queuosine (7-(((4,5-cis-dihydroxy-2-cyclopenten-1-yl)amino)methyl)-7-deazaguanosine). This Culex quinquefasciatus (Southern house mosquito) protein is Queuine tRNA-ribosyltransferase accessory subunit 2.